The chain runs to 75 residues: Insecticidal toxin OcyC10 (75 aa).

An N-terminal signal peptide occupies residues M1–A19. 2 disulfides stabilise this stretch: C50–C62 and C56–C68.

In terms of tissue distribution, expressed by the venom gland.

It localises to the secreted. Insecticidal toxin. This Opisthacanthus cayaporum (South American scorpion) protein is Insecticidal toxin OcyC10.